The following is a 308-amino-acid chain: Pantothenate kinase (308 aa).

93–100 (GSVAVGKS) contacts ATP.

This sequence belongs to the prokaryotic pantothenate kinase family.

It is found in the cytoplasm. The catalysed reaction is (R)-pantothenate + ATP = (R)-4'-phosphopantothenate + ADP + H(+). It participates in cofactor biosynthesis; coenzyme A biosynthesis; CoA from (R)-pantothenate: step 1/5. This chain is Pantothenate kinase, found in Corynebacterium diphtheriae (strain ATCC 700971 / NCTC 13129 / Biotype gravis).